A 109-amino-acid polypeptide reads, in one-letter code: Small ribosomal subunit protein bS6 (109 aa).

The protein belongs to the bacterial ribosomal protein bS6 family.

Functionally, binds together with bS18 to 16S ribosomal RNA. The chain is Small ribosomal subunit protein bS6 from Ehrlichia canis (strain Jake).